A 248-amino-acid polypeptide reads, in one-letter code: Probable transcriptional regulatory protein PP_1214 (248 aa).

The segment at 1 to 21 (MAGHSKWANIKHRKERQDAKR) is disordered.

It belongs to the TACO1 family.

The protein localises to the cytoplasm. This is Probable transcriptional regulatory protein PP_1214 from Pseudomonas putida (strain ATCC 47054 / DSM 6125 / CFBP 8728 / NCIMB 11950 / KT2440).